Reading from the N-terminus, the 381-residue chain is GDP-mannose transporter (381 aa).

The Cytoplasmic portion of the chain corresponds to 1–39 (MVESKKTDDYAIEMDKIDQGSKNFEAAAPPQPRSVPSSS). A helical transmembrane segment spans residues 40–60 (LSGNPVLPVLAYCGSSILMTV). The Lumenal portion of the chain corresponds to 61-68 (MNKYVLSG). The chain crosses the membrane as a helical span at residues 69–89 (LDFNLNFFLLCVQSIVCIIAI). Over 90–109 (QTCKFCGLITYRDFSADEAK) the chain is Cytoplasmic. A helical transmembrane segment spans residues 110 to 126 (KWFPISLLLIGMIYTGS). Residues 127–133 (KALQFLS) lie on the Lumenal side of the membrane. The chain crosses the membrane as a helical span at residues 134–150 (IPVYTIFKNLTIILIAY). Residues 151-159 (GEVLWFGGS) lie on the Cytoplasmic side of the membrane. The chain crosses the membrane as a helical span at residues 160-181 (VTGLTLFSFGLMVLSSIIAAWA). The Lumenal portion of the chain corresponds to 182–199 (DIKHAVESSGDTSAQVST). Residues 200–220 (LNAGYIWMLINCLCTSSYVLG) form a helical membrane-spanning segment. The Cytoplasmic segment spans residues 221-232 (MRKRIKLTNFKD). Residues 233 to 253 (FDTMFYNNLLSIPVLVVLTGL) form a helical membrane-spanning segment. Over 254 to 273 (MEDWSSANIDRNFPQADRSS) the chain is Lumenal. A helical membrane pass occupies residues 274–294 (IMFAMILSGLSSVFISYTSAW). Residues 295 to 302 (CVRVTSST) lie on the Cytoplasmic side of the membrane. A helical transmembrane segment spans residues 303–323 (TYSMVGALNKLPIALSGLIFF). Over 324-326 (DAP) the chain is Lumenal. Residues 327–347 (VTFPSVSAIAVGFVSGIVYAI) form a helical membrane-spanning segment. Topologically, residues 348-381 (AKIKQNAKPKTGVLPTSNPLVSASSQSMRDSLRS) are cytoplasmic.

This sequence belongs to the TPT transporter family. SLC35D subfamily. As to quaternary structure, homooligomer.

It localises to the golgi apparatus membrane. Its subcellular location is the cytoplasmic vesicle membrane. It is found in the endoplasmic reticulum membrane. Its function is as follows. Involved in the import of GDP-mannose from the cytoplasm into the Golgi lumen. This chain is GDP-mannose transporter (gmt1), found in Aspergillus oryzae (strain ATCC 42149 / RIB 40) (Yellow koji mold).